We begin with the raw amino-acid sequence, 293 residues long: Bifunctional protein FolD (293 aa).

Residues 165–167 (GRG), Thr192, and Val233 each bind NADP(+).

Belongs to the tetrahydrofolate dehydrogenase/cyclohydrolase family. In terms of assembly, homodimer.

The enzyme catalyses (6R)-5,10-methylene-5,6,7,8-tetrahydrofolate + NADP(+) = (6R)-5,10-methenyltetrahydrofolate + NADPH. It catalyses the reaction (6R)-5,10-methenyltetrahydrofolate + H2O = (6R)-10-formyltetrahydrofolate + H(+). Its pathway is one-carbon metabolism; tetrahydrofolate interconversion. In terms of biological role, catalyzes the oxidation of 5,10-methylenetetrahydrofolate to 5,10-methenyltetrahydrofolate and then the hydrolysis of 5,10-methenyltetrahydrofolate to 10-formyltetrahydrofolate. This chain is Bifunctional protein FolD, found in Streptomyces griseus subsp. griseus (strain JCM 4626 / CBS 651.72 / NBRC 13350 / KCC S-0626 / ISP 5235).